The chain runs to 334 residues: Ornithine carbamoyltransferase, catabolic (334 aa).

Carbamoyl phosphate contacts are provided by residues 57-60 (STRT), Gln84, Arg108, and 135-138 (HPTQ). L-ornithine-binding positions include Asn169, Asp233, and 237 to 238 (SM). Carbamoyl phosphate-binding positions include 275 to 276 (CL) and Arg320.

It belongs to the aspartate/ornithine carbamoyltransferase superfamily. OTCase family.

Its subcellular location is the cytoplasm. The enzyme catalyses carbamoyl phosphate + L-ornithine = L-citrulline + phosphate + H(+). It functions in the pathway amino-acid degradation; L-arginine degradation via ADI pathway; carbamoyl phosphate from L-arginine: step 2/2. Reversibly catalyzes the transfer of the carbamoyl group from carbamoyl phosphate (CP) to the N(epsilon) atom of ornithine (ORN) to produce L-citrulline. The chain is Ornithine carbamoyltransferase, catabolic (arcB) from Salmonella typhimurium (strain LT2 / SGSC1412 / ATCC 700720).